We begin with the raw amino-acid sequence, 189 residues long: FUN14 domain-containing protein 2 (189 aa).

Residues 1 to 80 (METSAPRAGS…GQESGPSAEK (80 aa)) lie on the Cytoplasmic side of the membrane. A phosphoserine mark is found at S10 and S53. A helical transmembrane segment spans residues 81–101 (YSVATQLFIGGVTGWCTGFIF). Residues 102–107 (QNVGKL) lie on the Mitochondrial intermembrane side of the membrane. Residues 108–128 (AATAVGGGFFLLQLANHTGYI) form a helical membrane-spanning segment. At 129 to 164 (KVDWQRVEKDMKKAKEQLKIRKSNQMPTEVRSKAEE) the chain is on the cytoplasmic side. Phosphoserine is present on S151. The helical transmembrane segment at 165-185 (VVSFVKKNVLVTGGFFGGFLL) threads the bilayer. Topologically, residues 186 to 189 (GMAS) are mitochondrial intermembrane.

This sequence belongs to the FUN14 family.

The protein resides in the mitochondrion outer membrane. The protein localises to the nucleus. In terms of biological role, binds directly and specifically 1,2-Diacyl-sn-glycero-3-phospho-(1'-myo-inositol-3',4',5'-bisphosphate) (PIP3) leading to the recruitment of PIP3 to mitochondria and may play a role in the regulation of the platelet activation via AKT/GSK3B/cGMP signaling pathways. May act as transcription factor that regulates SREBP1 (isoform SREBP-1C) expression in order to modulate triglyceride (TG) homeostasis in hepatocytes. The protein is FUN14 domain-containing protein 2 of Macaca mulatta (Rhesus macaque).